A 378-amino-acid polypeptide reads, in one-letter code: Small RNA 2'-O-methyltransferase (378 aa).

S-adenosyl-L-methionine is bound at residue Asp61. Mg(2+) contacts are provided by Glu114, Glu117, His118, and His176.

It belongs to the methyltransferase superfamily. HEN1 family. Mg(2+) serves as cofactor.

The protein resides in the cytoplasm. It carries out the reaction small RNA 3'-end nucleotide + S-adenosyl-L-methionine = small RNA 3'-end 2'-O-methylnucleotide + S-adenosyl-L-homocysteine + H(+). Its function is as follows. Methyltransferase that adds a 2'-O-methyl group at the 3'-end of small RNAs. This Schizosaccharomyces pombe (strain 972 / ATCC 24843) (Fission yeast) protein is Small RNA 2'-O-methyltransferase.